Here is a 386-residue protein sequence, read N- to C-terminus: Histidine decarboxylase (386 aa).

Residue His120 participates in substrate binding. The residue at position 233 (Lys233) is an N6-(pyridoxal phosphate)lysine.

This sequence belongs to the group II decarboxylase family. As to quaternary structure, homotetramer. Pyridoxal 5'-phosphate serves as cofactor.

It catalyses the reaction L-histidine + H(+) = histamine + CO2. The protein operates within siderophore biosynthesis; anguibactin biosynthesis. The protein is Histidine decarboxylase of Vibrio anguillarum (strain ATCC 68554 / 775) (Listonella anguillarum).